Reading from the N-terminus, the 114-residue chain is uncharacterized protein (114 aa).

Residues 2-97 (ESEPLYKLKA…VARKVLARVL (96 aa)) form the HTH arsR-type domain. Residues 37–60 (GELLSSDVGLESSNLSQQLGVLRR) constitute a DNA-binding region (H-T-H motif).

This is an uncharacterized protein from Mycobacterium tuberculosis (strain CDC 1551 / Oshkosh).